The following is a 228-amino-acid chain: Cytidylate kinase (228 aa).

Glycine 17–threonine 25 contributes to the ATP binding site.

The protein belongs to the cytidylate kinase family. Type 1 subfamily.

The protein resides in the cytoplasm. The enzyme catalyses CMP + ATP = CDP + ADP. It catalyses the reaction dCMP + ATP = dCDP + ADP. The polypeptide is Cytidylate kinase (Burkholderia thailandensis (strain ATCC 700388 / DSM 13276 / CCUG 48851 / CIP 106301 / E264)).